The sequence spans 421 residues: MDLENKVKKMGLGHEQGFGAPCLKCKEKCEGFELHFWRKICRNCKCGQEEHDVLLSNEEDRKVGKLFEDTKYTTLIAKLKSDGIPMYKRNVMILTNPVAAKKNVSINTVTYEWAPPVHNQALARQYMQMLPKEKQPVAGSEGAQYRKKQLAKQLPAHDQDPSKCHELSPREVKEMEQFVKKYKSEALGVGDVKLPCEMDAQGPKQMYIPGGERSTPPAAGAMEDKSAEHKSTQYSCYCCKLSMKEGDPAIYAERAGYNKLWHPACFVCSICHELLVDMIYFWKNEKLYCGRHYCDSEKPRCAGCDELIFSNEYTQAENQNWHLKHFCCFDCDSILAGEIYVMVNDKPVCKPCYVKNHAVVCQGCHNAIDPEVQRVTYNNFSWHASTECFLCSCCSKCLIGQKFMPVEGMVFCSVECKKMMS.

The region spanning 92-199 (MILTNPVAAK…GDVKLPCEMD (108 aa)) is the PET domain. The segment at 133-164 (EKQPVAGSEGAQYRKKQLAKQLPAHDQDPSKC) is disordered. Positions 155 to 164 (PAHDQDPSKC) are enriched in basic and acidic residues. 3 LIM zinc-binding domains span residues 234 to 297 (YSCY…CDSE), 299 to 359 (PRCA…NHAV), and 362 to 421 (QGCH…KMMS).

It belongs to the prickle / espinas / testin family. Interacts via LIM domain 1 with ZYX. Interacts (via LIM domain 3) with ENAH and VASP. Interacts with ALKBH4, talin, actin, alpha-actinin, GRIP1 and PXN. Interacts (via LIM domain 2) with ACTL7A (via N-terminus). Heterodimer with ACTL7A; the heterodimer interacts with ENAH to form a heterotrimer.

Its subcellular location is the cytoplasm. The protein localises to the cell junction. It localises to the focal adhesion. Its function is as follows. Scaffold protein that may play a role in cell adhesion, cell spreading and in the reorganization of the actin cytoskeleton. Plays a role in the regulation of cell proliferation. May act as a tumor suppressor. The chain is Testin (TES) from Aotus nancymaae (Ma's night monkey).